Consider the following 165-residue polypeptide: MAENFSFDVVSDFDRQELVNALDQVKREISQRYDLKGTETILELEKENIFITTNSELTLNSVIDIIRQKAIKRKLSLKIFEYKSIEAVSGNKVKQTITLKKGLNQEIAKKISKNLRDEIKKINVSINGETLRVMSKSKNDLQLAIKLLENLEETYKIPLQANNYR.

This sequence belongs to the YajQ family.

In terms of biological role, nucleotide-binding protein. This chain is Nucleotide-binding protein P9515_05441, found in Prochlorococcus marinus (strain MIT 9515).